The chain runs to 321 residues: F-box protein At4g35930 (321 aa).

Residues 1 to 13 are compositionally biased toward basic and acidic residues; sequence MGKVSPKDLDSKT. The interval 1–23 is disordered; sequence MGKVSPKDLDSKTSVRKKKLKSS. Residues 159 to 207 enclose the F-box domain; sequence ESQLESLPMDLLVKIVCHLHHDQLKAVFHVSQRIRMATILARQYHFNYT. The tract at residues 228–258 is disordered; sequence WPFRRGDGNPTMVSSPHTPKAPKHAPRPPSR.

This is F-box protein At4g35930 from Arabidopsis thaliana (Mouse-ear cress).